We begin with the raw amino-acid sequence, 160 residues long: Ribosomal RNA large subunit methyltransferase H (160 aa).

Residues leucine 76 and glycine 108 each contribute to the S-adenosyl-L-methionine site.

Belongs to the RNA methyltransferase RlmH family. As to quaternary structure, homodimer.

Its subcellular location is the cytoplasm. The enzyme catalyses pseudouridine(1915) in 23S rRNA + S-adenosyl-L-methionine = N(3)-methylpseudouridine(1915) in 23S rRNA + S-adenosyl-L-homocysteine + H(+). Specifically methylates the pseudouridine at position 1915 (m3Psi1915) in 23S rRNA. This Rhodopseudomonas palustris (strain BisB18) protein is Ribosomal RNA large subunit methyltransferase H.